The chain runs to 99 residues: Malonate decarboxylase acyl carrier protein (99 aa).

An O-(phosphoribosyl dephospho-coenzyme A)serine modification is found at Ser25.

This sequence belongs to the MdcC family. Covalently binds the prosthetic group of malonate decarboxylase.

The protein resides in the cytoplasm. Functionally, subunit of malonate decarboxylase, it is an acyl carrier protein to which acetyl and malonyl thioester residues are bound via a 2'-(5''-phosphoribosyl)-3'-dephospho-CoA prosthetic group and turn over during the catalytic mechanism. In Pseudomonas syringae pv. tomato (strain ATCC BAA-871 / DC3000), this protein is Malonate decarboxylase acyl carrier protein.